The chain runs to 517 residues: Cytochrome P450 78A5 (517 aa).

A helical transmembrane segment spans residues 20-40 (AFASVSLIIATVAFLLSPGGL). Heme is bound at residue C459.

Belongs to the cytochrome P450 family. It depends on heme as a cofactor. As to expression, expressed in the periphery of the shoot apical meristem and inflorescence meristem, on the adaxial sides of developing floral organs and in developing ovules in the region where the integuments emerge.

Its subcellular location is the membrane. Functionally, plays a role in regulating directional growth at the meristem/organ boundary. Is required for the promotion of leaf and floral organ growth and for the prolongation of the plastochron. Promotes organ growth in a non-cell-autonomous manner and may generate a mobile growth signal distinct from the classical phytohormones that prevents premature arrest of proliferation, until the correct primordium size has been reached. Functions probably in association with CYP78A7 in regulating relative growth of the shoot apical meristem and plant organs. Is required locally in developing ovules to stimulates cell proliferation and promote seed growth. The chain is Cytochrome P450 78A5 (CYP78A5) from Arabidopsis thaliana (Mouse-ear cress).